The chain runs to 129 residues: NADPH-dependent 7-cyano-7-deazaguanine reductase (129 aa).

The active-site Thioimide intermediate is the Cys-34. Residue Asp-41 is the Proton donor of the active site. Residues 56–58 and 75–76 contribute to the substrate site; these read VEL and HE.

This sequence belongs to the GTP cyclohydrolase I family. QueF type 1 subfamily.

It is found in the cytoplasm. The catalysed reaction is 7-aminomethyl-7-carbaguanine + 2 NADP(+) = 7-cyano-7-deazaguanine + 2 NADPH + 3 H(+). The protein operates within tRNA modification; tRNA-queuosine biosynthesis. In terms of biological role, catalyzes the NADPH-dependent reduction of 7-cyano-7-deazaguanine (preQ0) to 7-aminomethyl-7-deazaguanine (preQ1). The sequence is that of NADPH-dependent 7-cyano-7-deazaguanine reductase from Thioalkalivibrio sulfidiphilus (strain HL-EbGR7).